The sequence spans 482 residues: Islet cell autoantigen 1-like protein (482 aa).

One can recognise an AH domain in the interval 44–247 (ASDAELDAKL…TARMMSQIHE (204 aa)). Disordered regions lie at residues 365 to 393 (TQEC…PLAH) and 427 to 449 (SHTD…PNNG). Polar residues-rich tracts occupy residues 366–385 (QECQ…QEPS) and 428–449 (HTDN…PNNG).

This Homo sapiens (Human) protein is Islet cell autoantigen 1-like protein (ICA1L).